We begin with the raw amino-acid sequence, 396 residues long: Stearoyl-[acyl-carrier-protein] 9-desaturase, chloroplastic (396 aa).

The transit peptide at 1 to 33 (MAIRINTATFQSDLYRSFAFPQPKPLRSPKFAM) directs the protein to the chloroplast. Fe cation contacts are provided by Glu138, Glu176, His179, Glu229, Glu262, and His265.

The protein belongs to the fatty acid desaturase type 2 family. In terms of assembly, homodimer. Fe(2+) is required as a cofactor.

The protein localises to the plastid. It localises to the chloroplast. It catalyses the reaction octadecanoyl-[ACP] + 2 reduced [2Fe-2S]-[ferredoxin] + O2 + 2 H(+) = (9Z)-octadecenoyl-[ACP] + 2 oxidized [2Fe-2S]-[ferredoxin] + 2 H2O. It participates in lipid metabolism; fatty acid metabolism. In terms of biological role, converts stearoyl-ACP to oleoyl-ACP by introduction of a cis double bond between carbons 9 and 10 of the acyl chain. The sequence is that of Stearoyl-[acyl-carrier-protein] 9-desaturase, chloroplastic from Helianthus annuus (Common sunflower).